We begin with the raw amino-acid sequence, 1859 residues long: Protein TIC 214 (1859 aa).

Transmembrane regions (helical) follow at residues 18 to 38 (IINSVVVVGLYYGFLTTFSIG), 64 to 84 (FITGQLMMFISIYYAPLHLAL), 87 to 107 (PHTITVLALPYLLFHFFWNNH), 124 to 144 (LSIQCVFLNNLIFQLFNHFIL), 172 to 192 (VGWLIGHILFMKWVGLVLFWI), and 221 to 241 (IFSILLFITCVYYLGRMPAPI). The segment at 247–314 (KETSKTEERG…TEEIRVNGKE (68 aa)) is disordered. Residues 256-268 (GESEEERDVEIET) show a composition bias toward acidic residues. Residues 273–284 (KGTKQEQERSTE) are compositionally biased toward basic and acidic residues. Acidic residues predominate over residues 295–306 (EKEDPDKIDETE).

It belongs to the TIC214 family. In terms of assembly, part of the Tic complex.

It is found in the plastid. The protein localises to the chloroplast inner membrane. In terms of biological role, involved in protein precursor import into chloroplasts. May be part of an intermediate translocation complex acting as a protein-conducting channel at the inner envelope. This Buxus microphylla (Littleleaf boxwood) protein is Protein TIC 214.